Reading from the N-terminus, the 185-residue chain is Protein PBP4 (185 aa).

Low complexity-rich tracts occupy residues 1–24 and 46–62; these read MTTT…LSAS and AQAA…QQQQ. 2 disordered regions span residues 1–116 and 147–168; these read MTTT…YNRE and ETAS…SKNK. 3 stretches are compositionally biased toward polar residues: residues 73 to 83, 91 to 102, and 147 to 166; these read PANTKTKTIAS, KGSSTANGSSTN, and ETAS…SSSK.

As to quaternary structure, interacts with IGO1, LSM12 and PBP1.

The protein localises to the cytoplasm. It is found in the nucleus. The protein is Protein PBP4 (PBP4) of Saccharomyces cerevisiae (strain ATCC 204508 / S288c) (Baker's yeast).